Reading from the N-terminus, the 417-residue chain is Serine hydroxymethyltransferase (417 aa).

(6S)-5,6,7,8-tetrahydrofolate-binding positions include Leu-121 and 125-127; that span reads GHL. Lys-229 bears the N6-(pyridoxal phosphate)lysine mark. (6S)-5,6,7,8-tetrahydrofolate is bound at residue 355–357; the sequence is SPF.

Belongs to the SHMT family. In terms of assembly, homodimer. Requires pyridoxal 5'-phosphate as cofactor.

The protein resides in the cytoplasm. It catalyses the reaction (6R)-5,10-methylene-5,6,7,8-tetrahydrofolate + glycine + H2O = (6S)-5,6,7,8-tetrahydrofolate + L-serine. The protein operates within one-carbon metabolism; tetrahydrofolate interconversion. It functions in the pathway amino-acid biosynthesis; glycine biosynthesis; glycine from L-serine: step 1/1. Catalyzes the reversible interconversion of serine and glycine with tetrahydrofolate (THF) serving as the one-carbon carrier. This reaction serves as the major source of one-carbon groups required for the biosynthesis of purines, thymidylate, methionine, and other important biomolecules. Also exhibits THF-independent aldolase activity toward beta-hydroxyamino acids, producing glycine and aldehydes, via a retro-aldol mechanism. The chain is Serine hydroxymethyltransferase from Erwinia tasmaniensis (strain DSM 17950 / CFBP 7177 / CIP 109463 / NCPPB 4357 / Et1/99).